Here is an 843-residue protein sequence, read N- to C-terminus: Translation initiation factor IF-2 (843 aa).

Positions 198–219 (YKREEEEKKSKAKKAGGKGFKK) are disordered. Basic residues predominate over residues 207–219 (SKAKKAGGKGFKK). Residues 345–512 (SRAPVVTIMG…AVLLQSEVLE (168 aa)) enclose the tr-type G domain. A G1 region spans residues 354 to 361 (GHVDHGKT). 354–361 (GHVDHGKT) lines the GTP pocket. A G2 region spans residues 379–383 (GITQH). The tract at residues 400-403 (DTPG) is G3. GTP contacts are provided by residues 400–404 (DTPGH) and 454–457 (NKID). The tract at residues 454-457 (NKID) is G4. The interval 490-492 (SAK) is G5.

Belongs to the TRAFAC class translation factor GTPase superfamily. Classic translation factor GTPase family. IF-2 subfamily.

The protein resides in the cytoplasm. In terms of biological role, one of the essential components for the initiation of protein synthesis. Protects formylmethionyl-tRNA from spontaneous hydrolysis and promotes its binding to the 30S ribosomal subunits. Also involved in the hydrolysis of GTP during the formation of the 70S ribosomal complex. This is Translation initiation factor IF-2 from Francisella tularensis subsp. tularensis (strain WY96-3418).